The chain runs to 618 residues: Putative ATP-dependent DNA helicase Q1 (618 aa).

The region spanning 95–270 (INAVMSKEDA…KKMLGIPVAI (176 aa)) is the Helicase ATP-binding domain. Position 108 to 115 (108 to 115 (LSTGGGKS)) interacts with ATP. The DEVH box signature appears at 214–217 (DEVH). Positions 295 to 443 (CVEKIVRTIK…NLYNMVRYAS (149 aa)) constitute a Helicase C-terminal domain. 4 residues coordinate Zn(2+): cysteine 448, cysteine 466, cysteine 470, and cysteine 473. Positions 586 to 618 (KGRAEENNRKRKAAVTSSDEEVDVGDDDDVITL) are disordered. A compositionally biased stretch (acidic residues) spans 603 to 618 (SDEEVDVGDDDDVITL).

It belongs to the helicase family. RecQ subfamily. It depends on Zn(2+) as a cofactor.

It localises to the nucleus. It catalyses the reaction Couples ATP hydrolysis with the unwinding of duplex DNA by translocating in the 3'-5' direction.. The catalysed reaction is ATP + H2O = ADP + phosphate + H(+). In terms of biological role, DNA helicase that may play a role in the repair of DNA that is damaged by ultraviolet light or other mutagens. Exhibits a magnesium-dependent ATP-dependent DNA-helicase activity that unwinds single- and double-stranded DNA in a 3'-5' direction. In Caenorhabditis briggsae, this protein is Putative ATP-dependent DNA helicase Q1.